Here is a 155-residue protein sequence, read N- to C-terminus: Small ribosomal subunit protein uS7c (155 aa).

It belongs to the universal ribosomal protein uS7 family. As to quaternary structure, part of the 30S ribosomal subunit.

The protein localises to the plastid. It localises to the chloroplast. One of the primary rRNA binding proteins, it binds directly to 16S rRNA where it nucleates assembly of the head domain of the 30S subunit. The chain is Small ribosomal subunit protein uS7c (rps7) from Cabomba caroliniana (Carolina fanwort).